The chain runs to 352 residues: Holliday junction branch migration complex subunit RuvB (352 aa).

Residues 1–42 (MAIVSSSAGRADSQPPAAKSRVVDASPLPEEASPAREDGLRP) form a disordered region. The tract at residues 13–201 (SQPPAAKSRV…FGLIQRLEFY (189 aa)) is large ATPase domain (RuvB-L). Positions 33 to 42 (SPAREDGLRP) are enriched in basic and acidic residues. ATP contacts are provided by Leu40, Arg41, Gly82, Lys85, Thr86, Thr87, Arg191, Tyr201, and Arg238. Thr86 is a Mg(2+) binding site. Residues 202-273 (GLEDLQAIVE…LVDEALTLHR (72 aa)) form a small ATPAse domain (RuvB-S) region. Residues 276–352 (ARGLDASDRR…RRHLGWPELP (77 aa)) are head domain (RuvB-H). Arg331 and Arg336 together coordinate DNA.

It belongs to the RuvB family. As to quaternary structure, homohexamer. Forms an RuvA(8)-RuvB(12)-Holliday junction (HJ) complex. HJ DNA is sandwiched between 2 RuvA tetramers; dsDNA enters through RuvA and exits via RuvB. An RuvB hexamer assembles on each DNA strand where it exits the tetramer. Each RuvB hexamer is contacted by two RuvA subunits (via domain III) on 2 adjacent RuvB subunits; this complex drives branch migration. In the full resolvosome a probable DNA-RuvA(4)-RuvB(12)-RuvC(2) complex forms which resolves the HJ.

The protein localises to the cytoplasm. The enzyme catalyses ATP + H2O = ADP + phosphate + H(+). In terms of biological role, the RuvA-RuvB-RuvC complex processes Holliday junction (HJ) DNA during genetic recombination and DNA repair, while the RuvA-RuvB complex plays an important role in the rescue of blocked DNA replication forks via replication fork reversal (RFR). RuvA specifically binds to HJ cruciform DNA, conferring on it an open structure. The RuvB hexamer acts as an ATP-dependent pump, pulling dsDNA into and through the RuvAB complex. RuvB forms 2 homohexamers on either side of HJ DNA bound by 1 or 2 RuvA tetramers; 4 subunits per hexamer contact DNA at a time. Coordinated motions by a converter formed by DNA-disengaged RuvB subunits stimulates ATP hydrolysis and nucleotide exchange. Immobilization of the converter enables RuvB to convert the ATP-contained energy into a lever motion, pulling 2 nucleotides of DNA out of the RuvA tetramer per ATP hydrolyzed, thus driving DNA branch migration. The RuvB motors rotate together with the DNA substrate, which together with the progressing nucleotide cycle form the mechanistic basis for DNA recombination by continuous HJ branch migration. Branch migration allows RuvC to scan DNA until it finds its consensus sequence, where it cleaves and resolves cruciform DNA. The protein is Holliday junction branch migration complex subunit RuvB of Prochlorococcus marinus (strain MIT 9303).